A 3419-amino-acid chain; its full sequence is Utrophin (3419 aa).

The segment at 1–246 (MAKYGHLEAS…LPDKKSIIMY (246 aa)) is actin-binding. Residue Tyr-4 is modified to Phosphotyrosine. Phosphoserine is present on Ser-10. Calponin-homology (CH) domains lie at 31–135 (DVQK…LHWQ) and 150–255 (TNSE…EVLP). The tract at residues 268–905 (TLPRKYKKEC…YQQQLENELK (638 aa)) is interaction with SYNM. The residue at position 295 (Ser-295) is a Phosphoserine. Spectrin repeat units lie at residues 312–416 (DSYQ…SRLH), 421–525 (ELQK…NRLQ), 532–636 (QELL…NQVT), 690–795 (KKFD…RKIQ), 801–901 (NAYF…QQLE), 910–1012 (PAYL…RSLE), 1019–1121 (RDFK…SRLS), 1128–1229 (MNLK…HTLE), 1236–1333 (VELL…ISLE), 1335–1436 (QLQV…LFQK), 1438–1540 (ANFE…QDLE), 1547–1648 (RKLK…NTLL), 1653–1747 (QLEV…INSA), 1748–1840 (QMLI…KIKA), 1841–1958 (IPQR…SDRR), 1969–2070 (KQFH…PRLK), and 2077–2176 (SGYR…KTRT). The segment at 1336 to 1761 (LQVLRETDHM…GQDPAGTVEA (426 aa)) is interaction with SYNM. Position 1998 is a phosphoserine (Ser-1998). Phosphoserine is present on Ser-2201. Spectrin repeat units follow at residues 2216–2319 (ADLD…QQLE), 2336–2426 (EELM…SALE), 2433–2542 (QTSR…AHLE), 2549–2674 (NRLL…KQVG), and 2681–2783 (RDLQ…KQLQ). The disordered stretch occupies residues 2616–2640 (DQPIEAPEEPRRNPQSKTELTPEER). Residues 2785 to 3152 (AHRDFGPSSQ…TVLEGDNLET (368 aa)) form an interaction with SYNM region. The WW domain occupies 2799-2832 (TSVQLPWQRSISHNKVPYYINHQTQTTCWDHPKM). Residues 3052–3108 (KHQAKCNICKECPIVGFRYRSLKHFNYDVCQSCFFSGRTAKGHKLHYPMVEYCIPTT) form a ZZ-type; degenerate zinc finger. Residues Cys-3057, Cys-3060, Cys-3081, and Cys-3084 each coordinate Zn(2+). Disordered stretches follow at residues 3277–3296 (RRGL…YHTS) and 3344–3395 (DSDS…TDLT). Phosphoserine is present on Ser-3284.

As to quaternary structure, homodimer. Interacts with the syntrophins SNTA1; SNTB1 and SNTB2. Interacts with SYNM. Interacts (via its WWW and ZZ domains) with DAG1 (via the PPXY motif of betaDAG1); the interaction is inhibited by the tyrosine phosphorylation of the PPXY motif of DAG1. Interacts with DTNB. Interacts with PGM5.

It is found in the postsynaptic cell membrane. The protein resides in the cytoplasm. Its subcellular location is the cytoskeleton. In terms of biological role, may play a role in anchoring the cytoskeleton to the plasma membrane. In Rattus norvegicus (Rat), this protein is Utrophin.